Here is a 299-residue protein sequence, read N- to C-terminus: Superkiller complex protein 8 (299 aa).

WD repeat units follow at residues 11-48, 54-93, 96-135, 138-177, 180-219, 223-263, and 266-299; these read AHED…FLTE, KHIL…LHKT, SGPL…KLRS, NTNK…RVSE, AHGV…PYIA, GHSS…LDSS, and AHAD…ALKQ.

It belongs to the SKI8 family.

In Dictyostelium discoideum (Social amoeba), this protein is Superkiller complex protein 8 (skic8).